Reading from the N-terminus, the 103-residue chain is Small ribosomal subunit protein uS10 (103 aa).

It belongs to the universal ribosomal protein uS10 family. As to quaternary structure, part of the 30S ribosomal subunit.

Involved in the binding of tRNA to the ribosomes. The chain is Small ribosomal subunit protein uS10 from Magnetococcus marinus (strain ATCC BAA-1437 / JCM 17883 / MC-1).